The primary structure comprises 286 residues: Polyamine aminopropyltransferase (286 aa).

One can recognise a PABS domain in the interval 5 to 238 (TMWHETLHDQ…GIMTFAWATD (234 aa)). Glutamine 33 provides a ligand contact to S-methyl-5'-thioadenosine. Spermidine is bound by residues histidine 64 and aspartate 88. S-methyl-5'-thioadenosine-binding positions include glutamate 108 and 140–141 (DG). Residue aspartate 158 is the Proton acceptor of the active site. Position 158 to 161 (158 to 161 (DCTD)) interacts with spermidine. Proline 165 provides a ligand contact to S-methyl-5'-thioadenosine.

The protein belongs to the spermidine/spermine synthase family. Homodimer or homotetramer.

Its subcellular location is the cytoplasm. The catalysed reaction is S-adenosyl 3-(methylsulfanyl)propylamine + putrescine = S-methyl-5'-thioadenosine + spermidine + H(+). The protein operates within amine and polyamine biosynthesis; spermidine biosynthesis; spermidine from putrescine: step 1/1. Catalyzes the irreversible transfer of a propylamine group from the amino donor S-adenosylmethioninamine (decarboxy-AdoMet) to putrescine (1,4-diaminobutane) to yield spermidine. In Salmonella paratyphi A (strain ATCC 9150 / SARB42), this protein is Polyamine aminopropyltransferase.